Here is a 483-residue protein sequence, read N- to C-terminus: Probable cytochrome P450 517A1 (483 aa).

The helical transmembrane segment at 1–21 (MEIINVFLFLIILFLVKDFVK) threads the bilayer. Cys429 is a binding site for heme.

The protein belongs to the cytochrome P450 family. The cofactor is heme.

It localises to the membrane. This is Probable cytochrome P450 517A1 (cyp517A1) from Dictyostelium discoideum (Social amoeba).